The following is a 472-amino-acid chain: Pentatricopeptide repeat-containing protein At3g18970 (472 aa).

PPR repeat units lie at residues 107-139 (NERT…MVKK), 146-180 (SELI…TSVT), 181-216 (WNAM…GSGV), 219-253 (TDTT…GFTP), 256-286 (DVFI…MKVK), 287-321 (NVFT…GIKP), 322-352 (NEIT…MKTR), and 358-388 (VIEH…MPIK). Positions 393–472 (LLRSLCNACS…IKTRPGYSFV (80 aa)) are type E motif; degenerate.

Belongs to the PPR family. PCMP-E subfamily.

This is Pentatricopeptide repeat-containing protein At3g18970 (PCMP-E93) from Arabidopsis thaliana (Mouse-ear cress).